A 482-amino-acid chain; its full sequence is tRNA sulfurtransferase (482 aa).

A THUMP domain is found at 61 to 165 (LAIRDALTRI…DDRLLLIKGR (105 aa)). ATP contacts are provided by residues 183–184 (LI), K265, G287, and Q296. Residues C344 and C456 are joined by a disulfide bond. The 79-residue stretch at 404-482 (FGPNDVILDI…GFNNVKVYRP (79 aa)) folds into the Rhodanese domain. C456 serves as the catalytic Cysteine persulfide intermediate.

This sequence belongs to the ThiI family.

It localises to the cytoplasm. The catalysed reaction is [ThiI sulfur-carrier protein]-S-sulfanyl-L-cysteine + a uridine in tRNA + 2 reduced [2Fe-2S]-[ferredoxin] + ATP + H(+) = [ThiI sulfur-carrier protein]-L-cysteine + a 4-thiouridine in tRNA + 2 oxidized [2Fe-2S]-[ferredoxin] + AMP + diphosphate. It catalyses the reaction [ThiS sulfur-carrier protein]-C-terminal Gly-Gly-AMP + S-sulfanyl-L-cysteinyl-[cysteine desulfurase] + AH2 = [ThiS sulfur-carrier protein]-C-terminal-Gly-aminoethanethioate + L-cysteinyl-[cysteine desulfurase] + A + AMP + 2 H(+). It functions in the pathway cofactor biosynthesis; thiamine diphosphate biosynthesis. In terms of biological role, catalyzes the ATP-dependent transfer of a sulfur to tRNA to produce 4-thiouridine in position 8 of tRNAs, which functions as a near-UV photosensor. Also catalyzes the transfer of sulfur to the sulfur carrier protein ThiS, forming ThiS-thiocarboxylate. This is a step in the synthesis of thiazole, in the thiamine biosynthesis pathway. The sulfur is donated as persulfide by IscS. The polypeptide is tRNA sulfurtransferase (Escherichia coli (strain K12 / MC4100 / BW2952)).